Consider the following 142-residue polypeptide: MAKKIEAYIKLQVPAGNANPSPPVGPALGQHGVNIMEFCKAFNAQTQSMEKNLPVPVVITVFNDRSFTFITKTPPASVLLKKAAGIQKGSGVPNMDKVGTVTRAQLEEIANTKMADLNANDLDAAVKIIAGSARSMGLNVEG.

The protein belongs to the universal ribosomal protein uL11 family. As to quaternary structure, part of the ribosomal stalk of the 50S ribosomal subunit. Interacts with L10 and the large rRNA to form the base of the stalk. L10 forms an elongated spine to which L12 dimers bind in a sequential fashion forming a multimeric L10(L12)X complex. One or more lysine residues are methylated.

Forms part of the ribosomal stalk which helps the ribosome interact with GTP-bound translation factors. This is Large ribosomal subunit protein uL11 from Hydrogenovibrio crunogenus (strain DSM 25203 / XCL-2) (Thiomicrospira crunogena).